The following is a 415-amino-acid chain: Arginine biosynthesis bifunctional protein ArgJ (415 aa).

The substrate site is built by Thr156, Lys182, Thr193, Glu279, Asn410, and Thr415. The Nucleophile role is filled by Thr193.

Belongs to the ArgJ family. As to quaternary structure, heterotetramer of two alpha and two beta chains.

It is found in the cytoplasm. The catalysed reaction is N(2)-acetyl-L-ornithine + L-glutamate = N-acetyl-L-glutamate + L-ornithine. It carries out the reaction L-glutamate + acetyl-CoA = N-acetyl-L-glutamate + CoA + H(+). It participates in amino-acid biosynthesis; L-arginine biosynthesis; L-ornithine and N-acetyl-L-glutamate from L-glutamate and N(2)-acetyl-L-ornithine (cyclic): step 1/1. It functions in the pathway amino-acid biosynthesis; L-arginine biosynthesis; N(2)-acetyl-L-ornithine from L-glutamate: step 1/4. In terms of biological role, catalyzes two activities which are involved in the cyclic version of arginine biosynthesis: the synthesis of N-acetylglutamate from glutamate and acetyl-CoA as the acetyl donor, and of ornithine by transacetylation between N(2)-acetylornithine and glutamate. The polypeptide is Arginine biosynthesis bifunctional protein ArgJ (Synechococcus sp. (strain ATCC 27144 / PCC 6301 / SAUG 1402/1) (Anacystis nidulans)).